The sequence spans 78 residues: Acyl carrier protein (78 aa).

The 76-residue stretch at 2-77 (SDSAEKVKKI…DAIDYIEANK (76 aa)) folds into the Carrier domain. Ser37 carries the post-translational modification O-(pantetheine 4'-phosphoryl)serine.

It belongs to the acyl carrier protein (ACP) family. In terms of processing, 4'-phosphopantetheine is transferred from CoA to a specific serine of apo-ACP by AcpS. This modification is essential for activity because fatty acids are bound in thioester linkage to the sulfhydryl of the prosthetic group.

The protein resides in the cytoplasm. It functions in the pathway lipid metabolism; fatty acid biosynthesis. Carrier of the growing fatty acid chain in fatty acid biosynthesis. This chain is Acyl carrier protein, found in Sphingopyxis alaskensis (strain DSM 13593 / LMG 18877 / RB2256) (Sphingomonas alaskensis).